We begin with the raw amino-acid sequence, 297 residues long: Homoserine kinase (297 aa).

82 to 92 (PVSRGLGSSAA) contributes to the ATP binding site.

It belongs to the GHMP kinase family. Homoserine kinase subfamily.

It is found in the cytoplasm. It carries out the reaction L-homoserine + ATP = O-phospho-L-homoserine + ADP + H(+). It participates in amino-acid biosynthesis; L-threonine biosynthesis; L-threonine from L-aspartate: step 4/5. Its function is as follows. Catalyzes the ATP-dependent phosphorylation of L-homoserine to L-homoserine phosphate. This chain is Homoserine kinase, found in Clostridium botulinum (strain Loch Maree / Type A3).